We begin with the raw amino-acid sequence, 609 residues long: Probable ubiquitin-conjugating enzyme E2 25 (609 aa).

Disordered stretches follow at residues 70–99 (EEDE…LDPE) and 151–185 (ADKE…SQFS). Residues 156-178 (ASSSKSSHANNGNNSSKKATKAS) show a composition bias toward low complexity. A UBC core domain is found at 332–492 (DWAKRIQDEW…TFILSLKTMV (161 aa)). The active-site Glycyl thioester intermediate is the Cys-418.

Belongs to the ubiquitin-conjugating enzyme family. As to expression, expressed in seeds, pistils, siliques, hypocotyls and leaves.

It catalyses the reaction S-ubiquitinyl-[E1 ubiquitin-activating enzyme]-L-cysteine + [E2 ubiquitin-conjugating enzyme]-L-cysteine = [E1 ubiquitin-activating enzyme]-L-cysteine + S-ubiquitinyl-[E2 ubiquitin-conjugating enzyme]-L-cysteine.. It participates in protein modification; protein ubiquitination. Accepts the ubiquitin from the E1 complex and catalyzes its covalent attachment to other proteins. This chain is Probable ubiquitin-conjugating enzyme E2 25 (UBC25), found in Arabidopsis thaliana (Mouse-ear cress).